Consider the following 648-residue polypeptide: Macrolide export ATP-binding/permease protein MacB (648 aa).

Residues 5-243 (LELKDIRRSY…AGGTEPVVNT (239 aa)) enclose the ABC transporter domain. An ATP-binding site is contributed by 41–48 (GASGSGKS). A run of 4 helical transmembrane segments spans residues 273-293 (LLTMLGIIIGIASVVSIVVVG), 523-543 (LFMTLVAVISLVVGGIGVMNI), 576-596 (AVLVCLVGGALGITLSLLIAF), and 611-631 (PLALLLAFLCSTVTGILFGWL).

Belongs to the ABC transporter superfamily. Macrolide exporter (TC 3.A.1.122) family. As to quaternary structure, homodimer. Part of the tripartite efflux system MacAB-TolC, which is composed of an inner membrane transporter, MacB, a periplasmic membrane fusion protein, MacA, and an outer membrane component, TolC. The complex forms a large protein conduit and can translocate molecules across both the inner and outer membranes. Interacts with MacA.

It localises to the cell inner membrane. Its function is as follows. Part of the tripartite efflux system MacAB-TolC. MacB is a non-canonical ABC transporter that contains transmembrane domains (TMD), which form a pore in the inner membrane, and an ATP-binding domain (NBD), which is responsible for energy generation. Confers resistance against macrolides. The protein is Macrolide export ATP-binding/permease protein MacB of Escherichia coli O157:H7.